Consider the following 173-residue polypeptide: Ribosome maturation factor RimM (173 aa).

Residues 95–169 form the PRC barrel domain; that stretch reads DPDEFYDHQL…VIEIDPPEGL (75 aa).

The protein belongs to the RimM family. In terms of assembly, binds ribosomal protein uS19.

It localises to the cytoplasm. In terms of biological role, an accessory protein needed during the final step in the assembly of 30S ribosomal subunit, possibly for assembly of the head region. Essential for efficient processing of 16S rRNA. May be needed both before and after RbfA during the maturation of 16S rRNA. It has affinity for free ribosomal 30S subunits but not for 70S ribosomes. The protein is Ribosome maturation factor RimM of Mycobacteroides abscessus (strain ATCC 19977 / DSM 44196 / CCUG 20993 / CIP 104536 / JCM 13569 / NCTC 13031 / TMC 1543 / L948) (Mycobacterium abscessus).